A 103-amino-acid polypeptide reads, in one-letter code: Sec-independent protein translocase protein TatA (103 aa).

The helical transmembrane segment at 1-21 threads the bilayer; sequence MGNIFSPTHLIVILLIVLVLF. The segment at 60–103 is disordered; it reads YSKTTDVRPQQSQPLSVKRAAERRKGSSSFKEGKASVAKKQRGK.

Belongs to the TatA/E family. As to quaternary structure, the Tat system comprises two distinct complexes: a TatABC complex, containing multiple copies of TatA, TatB and TatC subunits, and a separate TatA complex, containing only TatA subunits. Substrates initially bind to the TatABC complex, which probably triggers association of the separate TatA complex to form the active translocon.

It is found in the cell inner membrane. Functionally, part of the twin-arginine translocation (Tat) system that transports large folded proteins containing a characteristic twin-arginine motif in their signal peptide across membranes. TatA could form the protein-conducting channel of the Tat system. In Bartonella quintana (strain Toulouse) (Rochalimaea quintana), this protein is Sec-independent protein translocase protein TatA.